Here is a 587-residue protein sequence, read N- to C-terminus: MKRTWNVCLTALLSVLLVAGSVPFHAEAKKPPKSYDEYKQVDVGKDGMVATAHALASEIGADVLKKGGNAIDAAVAIQFALNVTEPMMSGIGGGGFMMVYDGKTKDTTIIDSRERAPAGATPDMFLDENGKAIPFSERVTKGTAVGVPGTLKGLEEALDKWGTRSMKLLITLTIKLAEKGFPIDSVLADAISDYQEKLSRTAAKDVFLPNGEPLKEGDTLIQKDLAKTFKLIRSKGTDAFYKGKFAKTLSDTVQDFGGSMTEKDLENYDITIDEPIWGDYQGYQIATTPPPSSGGIFLLQMLKILDDFNLSQYDVRSWEKYQLLAETMHLSYADRASYAGDPEFVNVPLKGLLHPDYIKERQQLINLDQVNKKPKAGDPWKYQEGSANYKQVEQPKDKVEGQTTHFTVADRWGNVVSYTTTIEQLFGTGIMVPDYGVILNNELTDFDAIPGGANEVQPNKRPLSSMTPTILFKDDKPVLTVGSPGGATIISSVLQTILYHIEYGMGLKAAVEEPRIYTTSMSSYRYEDGVPKDVLSKLNGMGHRFGTSPVDIGNVQSISIDHENGTFKGVVISGSNDAAIGINLKRK.

The first 28 residues, 1–28, serve as a signal peptide directing secretion; it reads MKRTWNVCLTALLSVLLVAGSVPFHAEA. Residues 29 to 35 constitute a propeptide that is removed on maturation; that stretch reads KKPPKSY. Residue arginine 113 coordinates L-glutamate. Threonine 403 functions as the Nucleophile in the catalytic mechanism. Residues threonine 421, glutamate 423, glutamate 442, aspartate 445, 464 to 465, and 485 to 486 each bind L-glutamate; these read SS and GG.

The protein belongs to the gamma-glutamyltransferase family. In terms of assembly, this enzyme consists of two polypeptide chains, which are synthesized in precursor form from a single polypeptide. Cleaved by autocatalysis into a large and small subunit.

The protein resides in the secreted. It carries out the reaction an N-terminal (5-L-glutamyl)-[peptide] + an alpha-amino acid = 5-L-glutamyl amino acid + an N-terminal L-alpha-aminoacyl-[peptide]. The catalysed reaction is glutathione + H2O = L-cysteinylglycine + L-glutamate. It catalyses the reaction an S-substituted glutathione + H2O = an S-substituted L-cysteinylglycine + L-glutamate. The protein operates within sulfur metabolism; glutathione metabolism. Its activity is regulated as follows. Inhibited by glucose. Its function is as follows. Cleaves the gamma-glutamyl bond of extracellular glutathione (gamma-Glu-Cys-Gly), glutathione conjugates, and other gamma-glutamyl compounds. The metabolism of glutathione releases free glutamate and the dipeptide cysteinyl-glycine, which is hydrolyzed to cysteine and glycine by dipeptidases. Uses glutamine as a gamma-glutamyl donor and acceptor for gamma-polyglutamic acid synthesis. Dipeptides are better gamma-glutamyl acceptors than free amino acids. In Bacillus subtilis subsp. natto, this protein is Glutathione hydrolase proenzyme (ggt).